The sequence spans 1802 residues: Signaling mucin HKR1 (1802 aa).

Residues 1 to 21 (MVSLKIKKILLLVSLLNAIEA) form the signal peptide. Over 22 to 1485 (YSNDTIYSTS…SASAGKYAVK (1464 aa)) the chain is Extracellular. The N-linked (GlcNAc...) asparagine glycan is linked to Asn-24. 2 disordered regions span residues 47-176 (ISST…PREI) and 261-311 (YSSS…VSRP). Over residues 54–81 (NKENAITSSSETTTMAGQYGESGSTTIM) the composition is skewed to polar residues. The span at 88 to 107 (TSSQYISVTTTTQTSDTMSS) shows a compositional bias: low complexity. The segment covering 113–143 (EIATPSSSIVPTPLQSYSDESQISQTLSHNP) has biased composition (polar residues). Composition is skewed to low complexity over residues 145-172 (SVAESDSDTTSSESSSSVIISTSDSSAV) and 261-302 (YSSS…SESS). Residues 453–480 (SVPVAVSSTYTSSPSASVVVPSAYASSP) form a 1; approximate repeat. The tract at residues 453–788 (SVPVAVSSTY…VLSSTSTSSP (336 aa)) is 12 X 28 AA tandem repeats of S-[AV]-[P]-V-A-V-S-S-T-Y-T-S-S-P-S-A-P-A-A-I-S-S-T-Y-T-S-S-P. 11 consecutive repeat copies span residues 481-508 (SVPVAVSSTYTSSPSAPAAISSTYTSSP), 509-536 (SAPVAVSSTYTSSPSAPAAISSTYTSSP), 537-564 (SAPVAVSSTYTSSPSAPAAISSTYTSSP), 565-592 (SAPVAVSSTYTSSPSAPVAISSTYTSSP), 593-620 (SVPVAVSSTYTSSPSAPAAISSTYTSSP), 621-648 (SAPVAVSSTYTSSPSAPAAISSTYTSSP), 649-676 (SVPVAVSSTYTSSPSAPAAISSTYTSSP), 677-704 (SVPVAVSSTYTSSPSAPAAISSTYTSSP), 705-732 (SAPVAVSSTYTSSPSAPAAISSTYTSSP), 733-760 (SAPVAVSSTYTSSPSAPAAISSTYTSSP), and 761-788 (SAPVAVSSTYTSSPSALVVLSSTSTSSP). 2 disordered regions span residues 961–984 (SLQSQLSSSTKNPYDTANKNTETS) and 1067–1165 (ETIP…SYSR). Polar residues-rich tracts occupy residues 970-984 (TKNPYDTANKNTETS) and 1071-1123 (ASKS…TNTK). The segment covering 1136-1165 (TMGENGEETGLTTTKTQYKSSSETSGSYSR) has biased composition (low complexity). N-linked (GlcNAc...) asparagine glycans are attached at residues Asn-1252, Asn-1293, Asn-1342, and Asn-1400. A helical membrane pass occupies residues 1486–1506 (IIIFLIVLTIGVLLWLFVAFF). The Cytoplasmic portion of the chain corresponds to 1507-1802 (AFRHRNILLK…KQQNHQTTKI (296 aa)). Positions 1534 to 1559 (ESTELSRSSSGNQVYNEKPPESENES) are disordered.

Belongs to the HKR1/MSB2 family. Could be O-glycosylated in the serine/threonine-rich domain.

The protein resides in the cell membrane. Its function is as follows. Plasma membrane signaling mucin that promotes activation of the MAPK for the filamentous growth pathway. May regulate beta-glucan synthesis. Overexpression provides resistance to HM-1 killer toxin. In Saccharomyces cerevisiae (strain ATCC 204508 / S288c) (Baker's yeast), this protein is Signaling mucin HKR1 (HKR1).